We begin with the raw amino-acid sequence, 374 residues long: Large ribosomal subunit protein bL27m (374 aa).

The N-terminal 41 residues, 1-41 (MLRLSGVKSAVRARAAAGAAFSVSLSGPQAVSLLALPLVRH), are a transit peptide targeting the mitochondrion.

The protein belongs to the bacterial ribosomal protein bL27 family.

It localises to the mitochondrion. In terms of biological role, component of the large subunit of mitochondrial ribosome. This Yarrowia lipolytica (strain CLIB 122 / E 150) (Yeast) protein is Large ribosomal subunit protein bL27m (MRPL2).